Consider the following 254-residue polypeptide: Cell division protein FtsQ (254 aa).

Over 1–27 (MNILKRKTPQNIRFGEQKPKYYFHIRA) the chain is Cytoplasmic. A helical transmembrane segment spans residues 28–48 (FAVLLGVFFLLGVYFNWQSIL). At 49–254 (EKMDDKPISA…AGAAVGMVDR (206 aa)) the chain is on the periplasmic side. Residues 54-124 (KPISAFALVG…NRLSIWVSEY (71 aa)) enclose the POTRA domain.

This sequence belongs to the FtsQ/DivIB family. FtsQ subfamily. As to quaternary structure, part of a complex composed of FtsB, FtsL and FtsQ.

Its subcellular location is the cell inner membrane. Essential cell division protein. May link together the upstream cell division proteins, which are predominantly cytoplasmic, with the downstream cell division proteins, which are predominantly periplasmic. May control correct divisome assembly. The polypeptide is Cell division protein FtsQ (Haemophilus influenzae (strain ATCC 51907 / DSM 11121 / KW20 / Rd)).